The chain runs to 909 residues: Aconitate hydratase A (909 aa).

[4Fe-4S] cluster-binding residues include cysteine 450, cysteine 516, and cysteine 519.

It belongs to the aconitase/IPM isomerase family. In terms of assembly, monomer. [4Fe-4S] cluster is required as a cofactor.

The enzyme catalyses citrate = D-threo-isocitrate. The catalysed reaction is 3-hydroxybutane-1,2,3-tricarboxylate = 2-methyl-cis-aconitate + H2O. Its pathway is carbohydrate metabolism; tricarboxylic acid cycle; isocitrate from oxaloacetate: step 2/2. Functionally, involved in both the tricarboxylic acid (TCA) and methylcitric acid cycles. Catalyzes the reversible isomerization of citrate to isocitrate via cis-aconitate. Also catalyzes the rehydration of 2-methyl-cis-aconitate to produce 2-methylisocitrate. The apo form of AcnA functions as a RNA-binding regulatory protein which plays a role in the regulation of citrate concentration and in the sporulation. To prevent the accumulation of excessive levels of citrate, it binds near the 5' end of the citZ mRNA, decreasing its stability and thereby limiting the concentration of citrate synthase in the cell. Aconitase also binds to the gerE transcript late in sporulation and stabilizes it for translation, thereby increasing the rate and level of GerE protein accumulation. The protein is Aconitate hydratase A (citB) of Bacillus subtilis (strain 168).